The following is a 62-amino-acid chain: Translational regulator CsrA 3 (62 aa).

It belongs to the CsrA/RsmA family. Homodimer; the beta-strands of each monomer intercalate to form a hydrophobic core, while the alpha-helices form wings that extend away from the core.

Its subcellular location is the cytoplasm. In terms of biological role, a key translational regulator that binds mRNA to regulate translation initiation and/or mRNA stability. Mediates global changes in gene expression, shifting from rapid growth to stress survival by linking envelope stress, the stringent response and the catabolite repression systems. Usually binds in the 5'-UTR; binding at or near the Shine-Dalgarno sequence prevents ribosome-binding, repressing translation, binding elsewhere in the 5'-UTR can activate translation and/or stabilize the mRNA. Its function is antagonized by small RNA(s). This Pseudomonas syringae pv. tomato (strain ATCC BAA-871 / DC3000) protein is Translational regulator CsrA 3.